The following is a 121-amino-acid chain: Histone H2B, sperm (121 aa).

The segment at 1–30 is disordered; it reads MPPKSGKGQKKAGKAKGAPRSDKKRRRKRK. The residue at position 2 (Pro-2) is a N,N-dimethylproline. Residue Ser-108 is glycosylated (O-linked (GlcNAc) serine). A Glycyl lysine isopeptide (Lys-Gly) (interchain with G-Cter in ubiquitin) cross-link involves residue Lys-116.

This sequence belongs to the histone H2B family. In terms of assembly, the nucleosome is a histone octamer containing two molecules each of H2A, H2B, H3 and H4 assembled in one H3-H4 heterotetramer and two H2A-H2B heterodimers. The octamer wraps approximately 147 bp of DNA. Post-translationally, monoubiquitination of Lys-116 gives a specific tag for epigenetic transcriptional activation and is also prerequisite for histone H3 'Lys-4' and 'Lys-79' methylation. In terms of processing, glcNAcylation at Ser-108 promotes monoubiquitination of Lys-116. It fluctuates in response to extracellular glucose, and associates with transcribed genes.

Its subcellular location is the nucleus. The protein localises to the chromosome. In terms of biological role, core component of nucleosome. Nucleosomes wrap and compact DNA into chromatin, limiting DNA accessibility to the cellular machineries which require DNA as a template. Histones thereby play a central role in transcription regulation, DNA repair, DNA replication and chromosomal stability. DNA accessibility is regulated via a complex set of post-translational modifications of histones, also called histone code, and nucleosome remodeling. The polypeptide is Histone H2B, sperm (Marthasterias glacialis (Spiny starfish)).